Consider the following 179-residue polypeptide: Large ribosomal subunit protein uL5 (179 aa).

Belongs to the universal ribosomal protein uL5 family. In terms of assembly, part of the 50S ribosomal subunit; part of the 5S rRNA/L5/L18/L25 subcomplex. Contacts the 5S rRNA and the P site tRNA. Forms a bridge to the 30S subunit in the 70S ribosome.

Its function is as follows. This is one of the proteins that bind and probably mediate the attachment of the 5S RNA into the large ribosomal subunit, where it forms part of the central protuberance. In the 70S ribosome it contacts protein S13 of the 30S subunit (bridge B1b), connecting the 2 subunits; this bridge is implicated in subunit movement. Contacts the P site tRNA; the 5S rRNA and some of its associated proteins might help stabilize positioning of ribosome-bound tRNAs. The protein is Large ribosomal subunit protein uL5 of Prochlorococcus marinus (strain MIT 9303).